A 229-amino-acid polypeptide reads, in one-letter code: DNA mismatch repair protein MutH (229 aa).

This sequence belongs to the MutH family.

Its subcellular location is the cytoplasm. Its function is as follows. Sequence-specific endonuclease that cleaves unmethylated GATC sequences. It is involved in DNA mismatch repair. The polypeptide is DNA mismatch repair protein MutH (Shigella boydii serotype 18 (strain CDC 3083-94 / BS512)).